The sequence spans 337 residues: tRNA N6-adenosine threonylcarbamoyltransferase (337 aa).

His111 and His115 together coordinate Fe cation. Residues 134 to 138 (LVSGG), Asp167, Gly180, and Asn272 each bind substrate. Asp300 contributes to the Fe cation binding site.

Belongs to the KAE1 / TsaD family. The cofactor is Fe(2+).

The protein resides in the cytoplasm. It catalyses the reaction L-threonylcarbamoyladenylate + adenosine(37) in tRNA = N(6)-L-threonylcarbamoyladenosine(37) in tRNA + AMP + H(+). In terms of biological role, required for the formation of a threonylcarbamoyl group on adenosine at position 37 (t(6)A37) in tRNAs that read codons beginning with adenine. Is involved in the transfer of the threonylcarbamoyl moiety of threonylcarbamoyl-AMP (TC-AMP) to the N6 group of A37, together with TsaE and TsaB. TsaD likely plays a direct catalytic role in this reaction. This is tRNA N6-adenosine threonylcarbamoyltransferase from Yersinia pseudotuberculosis serotype I (strain IP32953).